Consider the following 357-residue polypeptide: UPF0283 membrane protein BMEA_A1074 (357 aa).

Positions 1 to 36 are disordered; it reads MSDKTPRKPTAFRLEQPARVSAASEQEEPRRPRAVK. Residues 27-36 are compositionally biased toward basic and acidic residues; that stretch reads EEPRRPRAVK. The next 2 membrane-spanning stretches (helical) occupy residues 78–98 and 109–129; these read ILFGALGILVSFAIGIWTEDL and LGWTALGVAMVALAAFAAIIL.

This sequence belongs to the UPF0283 family.

It is found in the cell inner membrane. The sequence is that of UPF0283 membrane protein BMEA_A1074 from Brucella melitensis biotype 2 (strain ATCC 23457).